The primary structure comprises 217 residues: Redox-sensing transcriptional repressor Rex (217 aa).

Residues 18–57 constitute a DNA-binding region (H-T-H motif); it reads LYYRFLKNLHASGKQRVSSAELSDAVKVDSATIRRDFSYF. 92 to 97 contacts NAD(+); the sequence is GVGNLG.

It belongs to the transcriptional regulatory Rex family. Homodimer.

It is found in the cytoplasm. In terms of biological role, modulates transcription in response to changes in cellular NADH/NAD(+) redox state. This is Redox-sensing transcriptional repressor Rex from Bacillus pumilus (strain SAFR-032).